The primary structure comprises 235 residues: MSFKSDNSNSILKNFKRTIIHPNGTNGEFNNNNNINNNNNNNNNNNNNNNNNNNNNSNNNLPIKRKVPESYSQYQYHQQKQVQKQNSQFHKESELNEMELDVEKEYYEQSKDIIGFKRFRSLDSNNNLNSNQFIENNQKSQFFNNNNNNNNNNNNSNNNKNFDQKDNEQEDIIKYMEFLSDIEQLNSDLKESKDNLESISIEMVLLETRLKGLLGLNTLRIIQNDQEQFLFKNKK.

Disordered regions lie at residues 20–64 (IHPN…LPIK) and 140–164 (SQFF…NFDQ). 2 stretches are compositionally biased toward low complexity: residues 30–60 (NNNN…SNNN) and 140–161 (SQFF…NNKN). Positions 174-213 (KYMEFLSDIEQLNSDLKESKDNLESISIEMVLLETRLKGL) form a coiled coil.

This is an uncharacterized protein from Dictyostelium discoideum (Social amoeba).